Consider the following 884-residue polypeptide: Valine--tRNA ligase (884 aa).

The 'HIGH' region motif lies at 47 to 57 (PNVTGALHIGH). The 'KMSKS' region motif lies at 525–529 (KMSKS). Residue Lys-528 coordinates ATP. Residues 812–884 (AVDFEAELAR…QQRFRDAIGK (73 aa)) are a coiled coil.

The protein belongs to the class-I aminoacyl-tRNA synthetase family. ValS type 1 subfamily. Monomer.

It localises to the cytoplasm. The catalysed reaction is tRNA(Val) + L-valine + ATP = L-valyl-tRNA(Val) + AMP + diphosphate. Functionally, catalyzes the attachment of valine to tRNA(Val). As ValRS can inadvertently accommodate and process structurally similar amino acids such as threonine, to avoid such errors, it has a 'posttransfer' editing activity that hydrolyzes mischarged Thr-tRNA(Val) in a tRNA-dependent manner. The polypeptide is Valine--tRNA ligase (Nitratidesulfovibrio vulgaris (strain ATCC 29579 / DSM 644 / CCUG 34227 / NCIMB 8303 / VKM B-1760 / Hildenborough) (Desulfovibrio vulgaris)).